A 264-amino-acid polypeptide reads, in one-letter code: ATP synthase subunit b 1 (264 aa).

A helical transmembrane segment spans residues 2–22 (LFDWFTFWAQLLNFLILVWLL). The tract at residues 240–264 (ASSALLDGPDDEMNEEEGHAGKDAD) is disordered. Residues 255–264 (EEGHAGKDAD) are compositionally biased toward basic and acidic residues.

It belongs to the ATPase B chain family. In terms of assembly, F-type ATPases have 2 components, F(1) - the catalytic core - and F(0) - the membrane proton channel. F(1) has five subunits: alpha(3), beta(3), gamma(1), delta(1), epsilon(1). F(0) has four main subunits: a(1), b(2) and c(10-14). The alpha and beta chains form an alternating ring which encloses part of the gamma chain. F(1) is attached to F(0) by a central stalk formed by the gamma and epsilon chains, while a peripheral stalk is formed by the delta and b chains.

The protein resides in the cell inner membrane. In terms of biological role, f(1)F(0) ATP synthase produces ATP from ADP in the presence of a proton or sodium gradient. F-type ATPases consist of two structural domains, F(1) containing the extramembraneous catalytic core and F(0) containing the membrane proton channel, linked together by a central stalk and a peripheral stalk. During catalysis, ATP synthesis in the catalytic domain of F(1) is coupled via a rotary mechanism of the central stalk subunits to proton translocation. Functionally, component of the F(0) channel, it forms part of the peripheral stalk, linking F(1) to F(0). This chain is ATP synthase subunit b 1, found in Chlorobium luteolum (strain DSM 273 / BCRC 81028 / 2530) (Pelodictyon luteolum).